The primary structure comprises 1374 residues: DNA-directed RNA polymerase subunit beta (1374 aa).

This sequence belongs to the RNA polymerase beta chain family. As to quaternary structure, the RNAP catalytic core consists of 2 alpha, 1 beta, 1 beta' and 1 omega subunit. When a sigma factor is associated with the core the holoenzyme is formed, which can initiate transcription.

It catalyses the reaction RNA(n) + a ribonucleoside 5'-triphosphate = RNA(n+1) + diphosphate. DNA-dependent RNA polymerase catalyzes the transcription of DNA into RNA using the four ribonucleoside triphosphates as substrates. This Rickettsia prowazekii (strain Madrid E) protein is DNA-directed RNA polymerase subunit beta.